A 129-amino-acid chain; its full sequence is Protein BEX2 (129 aa).

Positions 1-38 are disordered; that stretch reads MESKVEQGVKNLNMENDHQEKEEKEEKPQDANKREPVV. Residues 15–36 show a composition bias toward basic and acidic residues; the sequence is ENDHQEKEEKEEKPQDANKREP. Residue R51 is modified to Omega-N-methylarginine. Residues 108–129 are disordered; sequence SLRAVSTDPPHHDHHDEFCLMP. Positions 116–129 are enriched in basic and acidic residues; the sequence is PPHHDHHDEFCLMP. Residues 118-122 are his cluster; that stretch reads HHDHH. C126 lines the Zn(2+) pocket.

The protein belongs to the BEX family. Interacts with LMO2, possibly leading to regulate the transcriptional activity of a DNA-binding complex containing LMO2. Interacts with OMP.

The protein resides in the nucleus. Its subcellular location is the cytoplasm. Regulator of mitochondrial apoptosis and G1 cell cycle. Regulates the level of PP2A regulatory subunit B and PP2A phosphatase activity. In absence of reductive stress, acts as a pseudosubstrate for the CRL2(FEM1B) complex: associates with FEM1B via zinc, thereby preventing association between FEM1B and its substrates. This chain is Protein BEX2 (Bex2), found in Rattus norvegicus (Rat).